Consider the following 211-residue polypeptide: COMM domain-containing protein 10 (211 aa).

Residues 131-211 form the COMM domain; the sequence is QLNEIGWRLH…SIQEKLDTLA (81 aa).

It belongs to the COMM domain-containing protein 10 family. In terms of assembly, component of the commander complex consisting of the CCC subcomplex and the retriever subcomplex. Component of the CCC subcomplex.

Scaffold protein in the commander complex that is essential for endosomal recycling of transmembrane cargos; the commander complex is composed of the CCC subcomplex and the retriever subcomplex. In Dictyostelium discoideum (Social amoeba), this protein is COMM domain-containing protein 10 (commd10).